The sequence spans 145 residues: D-aminoacyl-tRNA deacylase (145 aa).

The Gly-cisPro motif, important for rejection of L-amino acids signature appears at glycine 137 to proline 138.

The protein belongs to the DTD family. As to quaternary structure, homodimer.

It localises to the cytoplasm. It carries out the reaction glycyl-tRNA(Ala) + H2O = tRNA(Ala) + glycine + H(+). It catalyses the reaction a D-aminoacyl-tRNA + H2O = a tRNA + a D-alpha-amino acid + H(+). Functionally, an aminoacyl-tRNA editing enzyme that deacylates mischarged D-aminoacyl-tRNAs. Also deacylates mischarged glycyl-tRNA(Ala), protecting cells against glycine mischarging by AlaRS. Acts via tRNA-based rather than protein-based catalysis; rejects L-amino acids rather than detecting D-amino acids in the active site. By recycling D-aminoacyl-tRNA to D-amino acids and free tRNA molecules, this enzyme counteracts the toxicity associated with the formation of D-aminoacyl-tRNA entities in vivo and helps enforce protein L-homochirality. This Pseudomonas entomophila (strain L48) protein is D-aminoacyl-tRNA deacylase.